The chain runs to 134 residues: Auxin-responsive protein SAUR40 (134 aa).

This sequence belongs to the ARG7 family. Interacts with and inhibits PP2C-D subfamily of type 2C phosphatases such as PP2C67/PP2C-D1.

Its subcellular location is the cytoplasm. Its function is as follows. Provide a mechanistic link between auxin and plasma membrane H(+)-ATPases (PM H(+)-ATPases, e.g. AHA1 and AHA2), and triggers PM H(+)-ATPases activity by promoting phosphorylation of their C-terminal autoinhibitory domain as a result of PP2C-D subfamily of type 2C phosphatases inhibition, thus leading to the acidification of the apoplast and the facilitation of solutes and water uptake to drive cell expansion. Plays a role in the regulation of cell expansion, root meristem patterning and auxin transport. This chain is Auxin-responsive protein SAUR40, found in Arabidopsis thaliana (Mouse-ear cress).